Consider the following 652-residue polypeptide: Leucine aminopeptidase 2 (652 aa).

Residues 165–167 (QLE) and 293–298 (PYGGME) each bind a peptide. Residue His-322 coordinates Zn(2+). Glu-323 functions as the Proton acceptor in the catalytic mechanism. Positions 326 and 345 each coordinate Zn(2+). The Proton donor role is filled by Tyr-411.

Belongs to the peptidase M1 family. It depends on Zn(2+) as a cofactor.

The protein localises to the cytoplasm. Its subcellular location is the nucleus. The enzyme catalyses an epoxide + H2O = an ethanediol. Aminopeptidase that preferentially cleaves di- and tripeptides. Also has low epoxide hydrolase activity (in vitro). Can hydrolyze the epoxide leukotriene LTA(4) but it forms preferentially 5,6-dihydroxy-7,9,11,14-eicosatetraenoic acid rather than the cytokine leukotriene B(4) as the product compared to the homologous mammalian enzyme (in vitro). The polypeptide is Leucine aminopeptidase 2 (Candida glabrata (strain ATCC 2001 / BCRC 20586 / JCM 3761 / NBRC 0622 / NRRL Y-65 / CBS 138) (Yeast)).